A 659-amino-acid polypeptide reads, in one-letter code: A-type ATP synthase subunit I (659 aa).

A run of 8 helical transmembrane segments spans residues 376 to 396 (FFFG…IISA), 415 to 435 (IMLW…SYCG), 460 to 480 (MIAL…GFIV), 489 to 509 (GAIF…LFAL), 518 to 538 (LIVK…EVLA), 542 to 562 (MAVL…LSYA), 568 to 588 (ALAT…IWGI), and 590 to 610 (IASV…GHIF).

It belongs to the V-ATPase 116 kDa subunit family. As to quaternary structure, has multiple subunits with at least A(3), B(3), C, D, E, F, H, I and proteolipid K(x).

The protein localises to the cell membrane. Component of the A-type ATP synthase that produces ATP from ADP in the presence of a proton gradient across the membrane. In Pyrococcus horikoshii (strain ATCC 700860 / DSM 12428 / JCM 9974 / NBRC 100139 / OT-3), this protein is A-type ATP synthase subunit I.